The following is a 190-amino-acid chain: UPF0301 protein PSPTO_5037 (190 aa).

This sequence belongs to the UPF0301 (AlgH) family.

The sequence is that of UPF0301 protein PSPTO_5037 from Pseudomonas syringae pv. tomato (strain ATCC BAA-871 / DC3000).